The chain runs to 282 residues: Leucine-rich protein (282 aa).

Its function is as follows. Not essential for viability or growth. Nevertheless, uncontrolled production in E.coli is detrimental to the normal physiology of the bacteria. This chain is Leucine-rich protein (lrp), found in Streptococcus dysgalactiae subsp. equisimilis (Streptococcus equisimilis).